Here is a 679-residue protein sequence, read N- to C-terminus: UvrABC system protein B (679 aa).

The 152-residue stretch at 25-176 (YGVNQGKQYQ…NVRESLRELV (152 aa)) folds into the Helicase ATP-binding domain. 38–45 (GATGTGKT) serves as a coordination point for ATP. The short motif at 91–114 (YYDYYQPEAYVPVSDTYIAKTSSV) is the Beta-hairpin element. A Helicase C-terminal domain is found at 429–591 (QIDDLLDEIR…IIPKPAGKKP (163 aa)). Positions 639 to 674 (PEIIDKLEGKMNLAAEELDFEQAAKLRDRIRQLRKK) constitute a UVR domain.

This sequence belongs to the UvrB family. In terms of assembly, forms a heterotetramer with UvrA during the search for lesions. Interacts with UvrC in an incision complex.

It is found in the cytoplasm. Functionally, the UvrABC repair system catalyzes the recognition and processing of DNA lesions. A damage recognition complex composed of 2 UvrA and 2 UvrB subunits scans DNA for abnormalities. Upon binding of the UvrA(2)B(2) complex to a putative damaged site, the DNA wraps around one UvrB monomer. DNA wrap is dependent on ATP binding by UvrB and probably causes local melting of the DNA helix, facilitating insertion of UvrB beta-hairpin between the DNA strands. Then UvrB probes one DNA strand for the presence of a lesion. If a lesion is found the UvrA subunits dissociate and the UvrB-DNA preincision complex is formed. This complex is subsequently bound by UvrC and the second UvrB is released. If no lesion is found, the DNA wraps around the other UvrB subunit that will check the other stand for damage. This Prochlorococcus marinus (strain MIT 9211) protein is UvrABC system protein B.